The chain runs to 103 residues: Co-chaperonin GroES (103 aa).

This sequence belongs to the GroES chaperonin family. As to quaternary structure, heptamer of 7 subunits arranged in a ring. Interacts with the chaperonin GroEL.

Its subcellular location is the cytoplasm. In terms of biological role, together with the chaperonin GroEL, plays an essential role in assisting protein folding. The GroEL-GroES system forms a nano-cage that allows encapsulation of the non-native substrate proteins and provides a physical environment optimized to promote and accelerate protein folding. GroES binds to the apical surface of the GroEL ring, thereby capping the opening of the GroEL channel. In Microcystis aeruginosa (strain NIES-843 / IAM M-2473), this protein is Co-chaperonin GroES.